The chain runs to 287 residues: Phospholipid phosphatase 2 (287 aa).

Residues 1-4 (MERR) lie on the Cytoplasmic side of the membrane. A helical membrane pass occupies residues 5-25 (WVFVLLDVLCVLVAALPCAIL). Residues 26-51 (TFVNTPYKRGFYCGDDSIRYPYRPDT) are Lumenal-facing. Residues 52–72 (ITHGLMAGVIITATVILVSAG) form a helical membrane-spanning segment. The Cytoplasmic segment spans residues 73–87 (EAYLVYTDRLYSRSD). A helical membrane pass occupies residues 88–108 (FNNYLAALYKVVGTFLFGAAV). Over 109 to 161 (SQSLTDLAKYMTGRLRPNFLAVCDPDWSRVNCSAYVQVEVCRGSSANVTESRL) the chain is Lumenal. The phosphatase sequence motif I stretch occupies residues 117–125 (KYMTGRLRP). 2 N-linked (GlcNAc...) asparagine glycosylation sites follow: N139 and N155. A helical transmembrane segment spans residues 162-182 (SFYSGHSSFGMYCMVFLALYV). Positions 164-167 (YSGH) are phosphatase sequence motif II. H167 serves as the catalytic Proton donors. At 183–193 (QARLCWKWARL) the chain is on the cytoplasmic side. The chain crosses the membrane as a helical span at residues 194-211 (LRPTVQFFLVAFALYVGY). At 212-218 (TRVSDHK) the chain is on the lumenal side. Positions 212–223 (TRVSDHKHHWSD) are phosphatase sequence motif III. H219 (nucleophile) is an active-site residue. Residues 219 to 239 (HHWSDVLVGLLQGALVASLTV) traverse the membrane as a helical segment. Residues 240–287 (RYISDFFKARPPQHCPEEEDLERKPSLSLTLALGETDCNHYGYPVSSS) lie on the Cytoplasmic side of the membrane.

This sequence belongs to the PA-phosphatase related phosphoesterase family. In terms of assembly, forms functional homodimers and homooligomers. Can also form heterooligomers with PLPP1 and PLPP3. N-glycosylated.

It is found in the membrane. Its subcellular location is the cell membrane. The protein resides in the early endosome membrane. The protein localises to the endoplasmic reticulum membrane. The enzyme catalyses a 1,2-diacyl-sn-glycero-3-phosphate + H2O = a 1,2-diacyl-sn-glycerol + phosphate. The catalysed reaction is 1,2-dihexadecanoyl-sn-glycero-3-phosphate + H2O = 1,2-dihexadecanoyl-sn-glycerol + phosphate. It catalyses the reaction 1,2-di-(9Z-octadecenoyl)-sn-glycero-3-phosphate + H2O = 1,2-di-(9Z-octadecenoyl)-sn-glycerol + phosphate. It carries out the reaction a monoacyl-sn-glycero-3-phosphate + H2O = a monoacylglycerol + phosphate. The enzyme catalyses (9Z)-octadecenoyl-sn-glycero-3-phosphate + H2O = (9Z-octadecenoyl)-glycerol + phosphate. The catalysed reaction is sphing-4-enine 1-phosphate + H2O = sphing-4-enine + phosphate. It catalyses the reaction an N-acylsphing-4-enine 1-phosphate + H2O = an N-acylsphing-4-enine + phosphate. It carries out the reaction N-(octanoyl)-sphing-4-enine-1-phosphate + H2O = N-octanoylsphing-4-enine + phosphate. The enzyme catalyses N-(9Z-octadecenoyl)-ethanolamine phosphate + H2O = N-(9Z-octadecenoyl) ethanolamine + phosphate. Its pathway is lipid metabolism; phospholipid metabolism. Magnesium-independent phospholipid phosphatase. Insensitive to N-ethylmaleimide. Magnesium-independent phospholipid phosphatase that catalyzes the dephosphorylation of a variety of glycerolipid and sphingolipid phosphate esters including phosphatidate/PA, lysophosphatidate/LPA, sphingosine 1-phosphate/S1P and ceramide 1-phosphate/C1P. Has no apparent extracellular phosphatase activity and therefore most probably acts intracellularly. Also acts on N-oleoyl ethanolamine phosphate/N-(9Z-octadecenoyl)-ethanolamine phosphate, a potential physiological compound. Through dephosphorylation of these bioactive lipid mediators produces new bioactive compounds and may regulate signal transduction in different cellular processes. Indirectly regulates, for instance, cell cycle G1/S phase transition through its phospholipid phosphatase activity. This is Phospholipid phosphatase 2 from Bos taurus (Bovine).